The sequence spans 597 residues: uncharacterized protein (597 aa).

Residues 1–23 (MSHEGSRQARDRGVTRSKAEKAR) are compositionally biased toward basic and acidic residues. Disordered stretches follow at residues 1–32 (MSHEGSRQARDRGVTRSKAEKARPPTQPVPQV) and 171–192 (RESQEPTQSSEPSAEPRVNPRP). Positions 175 to 186 (EPTQSSEPSAEP) are enriched in low complexity. Ser237 and Ser241 each carry phosphoserine. Disordered stretches follow at residues 302–335 (SLLSVPTPDGPSPFLQPGGMERRPSHKTPTMRLD) and 549–569 (EAEEGTPQAPEQQPIQTGVSK). Positions 557–568 (APEQQPIQTGVS) are enriched in polar residues.

This is an uncharacterized protein from Rattus norvegicus (Rat).